A 155-amino-acid chain; its full sequence is SsrA-binding protein (155 aa).

This sequence belongs to the SmpB family.

It is found in the cytoplasm. Required for rescue of stalled ribosomes mediated by trans-translation. Binds to transfer-messenger RNA (tmRNA), required for stable association of tmRNA with ribosomes. tmRNA and SmpB together mimic tRNA shape, replacing the anticodon stem-loop with SmpB. tmRNA is encoded by the ssrA gene; the 2 termini fold to resemble tRNA(Ala) and it encodes a 'tag peptide', a short internal open reading frame. During trans-translation Ala-aminoacylated tmRNA acts like a tRNA, entering the A-site of stalled ribosomes, displacing the stalled mRNA. The ribosome then switches to translate the ORF on the tmRNA; the nascent peptide is terminated with the 'tag peptide' encoded by the tmRNA and targeted for degradation. The ribosome is freed to recommence translation, which seems to be the essential function of trans-translation. This Oenococcus oeni (strain ATCC BAA-331 / PSU-1) protein is SsrA-binding protein.